A 64-amino-acid chain; its full sequence is DNA gyrase inhibitor YacG (64 aa).

C10, C13, C29, and C33 together coordinate Zn(2+).

This sequence belongs to the DNA gyrase inhibitor YacG family. As to quaternary structure, interacts with GyrB. Requires Zn(2+) as cofactor.

Inhibits all the catalytic activities of DNA gyrase by preventing its interaction with DNA. Acts by binding directly to the C-terminal domain of GyrB, which probably disrupts DNA binding by the gyrase. The chain is DNA gyrase inhibitor YacG from Pectobacterium atrosepticum (strain SCRI 1043 / ATCC BAA-672) (Erwinia carotovora subsp. atroseptica).